Consider the following 280-residue polypeptide: Large ribosomal subunit protein uL2 (280 aa).

2 disordered regions span residues 1 to 59 (MAIR…GGHK) and 223 to 280 (GVVM…NKKR). Over residues 23 to 33 (ELTRSTPEKSL) the composition is skewed to basic and acidic residues. Basic residues-rich tracts occupy residues 36–59 (PLHKTGGRNVHGHITTRHKGGGHK) and 269–280 (VRRRRSNKNKKR).

Belongs to the universal ribosomal protein uL2 family. Part of the 50S ribosomal subunit. Forms a bridge to the 30S subunit in the 70S ribosome.

Functionally, one of the primary rRNA binding proteins. Required for association of the 30S and 50S subunits to form the 70S ribosome, for tRNA binding and peptide bond formation. It has been suggested to have peptidyltransferase activity; this is somewhat controversial. Makes several contacts with the 16S rRNA in the 70S ribosome. This is Large ribosomal subunit protein uL2 from Corynebacterium kroppenstedtii (strain DSM 44385 / JCM 11950 / CIP 105744 / CCUG 35717).